A 101-amino-acid polypeptide reads, in one-letter code: Small ribosomal subunit protein bS18c (101 aa).

Belongs to the bacterial ribosomal protein bS18 family. Part of the 30S ribosomal subunit.

Its subcellular location is the plastid. It is found in the chloroplast. The polypeptide is Small ribosomal subunit protein bS18c (Vitis vinifera (Grape)).